The primary structure comprises 515 residues: Interferon alpha/beta receptor 2 (515 aa).

An N-terminal signal peptide occupies residues 1 to 26 (MLLSQNAFIFRSLNLVLMVYISLVFG). The Extracellular portion of the chain corresponds to 27–243 (ISYDSPDYTD…QESESAESAK (217 aa)). Cystine bridges form between cysteine 39-cysteine 122 and cysteine 85-cysteine 93. Asparagine 58, asparagine 87, asparagine 116, asparagine 188, and asparagine 192 each carry an N-linked (GlcNAc...) asparagine glycan. Cysteine 207 and cysteine 227 are oxidised to a cystine. The chain crosses the membrane as a helical span at residues 244 to 264 (IGGIITVFLIALVLTSTIVTL). The Cytoplasmic portion of the chain corresponds to 265–515 (KWIGYICLRN…VDLGDGYIMR (251 aa)). Disordered regions lie at residues 318 to 418 (YDDE…EGSG) and 455 to 515 (EMVD…YIMR). Tyrosine 337 is modified (phosphotyrosine). Positions 362-375 (PESEEEPDLPEVDV) are enriched in acidic residues. A Phosphoserine modification is found at serine 400. Residues 418 to 444 (GGRITFNVDLNSVFLRVLDDEDSDDLE) form a mediates interaction with STAT2 (and required for the recruitment of USP18) region. The segment covering 464-488 (NVQSNHLLASGEGTQPTFPSPSSEG) has biased composition (polar residues). The residue at position 467 (serine 467) is a Phosphoserine. Tyrosine 512 is modified (phosphotyrosine).

This sequence belongs to the type II cytokine receptor family. As to quaternary structure, heterodimer with IFNAR1; forming the receptor for type I interferon. Interacts with JAK1. Interacts with the transcriptional factors STAT1 and STAT2. Interacts with USP18; indirectly via STAT2, it negatively regulates the assembly of the ternary interferon-IFNAR1-IFNAR2 complex and therefore type I interferon signaling. In terms of processing, phosphorylated on tyrosine residues upon interferon binding. Phosphorylation at Tyr-337 or Tyr-512 are sufficient to mediate interferon dependent activation of STAT1, STAT2 and STAT3 leading to antiproliferative effects on many different cell types. Glycosylated. In terms of tissue distribution, isoform 3 is detected in the urine (at protein level). Expressed in blood cells. Expressed in lymphoblastoid and fibrosarcoma cell lines.

It is found in the cell membrane. The protein resides in the secreted. Its function is as follows. Together with IFNAR1, forms the heterodimeric receptor for type I interferons (including interferons alpha, beta, epsilon, omega and kappa). Type I interferon binding activates the JAK-STAT signaling cascade, resulting in transcriptional activation or repression of interferon-regulated genes that encode the effectors of the interferon response. Mechanistically, type I interferon-binding brings the IFNAR1 and IFNAR2 subunits into close proximity with one another, driving their associated Janus kinases (JAKs) (TYK2 bound to IFNAR1 and JAK1 bound to IFNAR2) to cross-phosphorylate one another. The activated kinases phosphorylate specific tyrosine residues on the intracellular domains of IFNAR1 and IFNAR2, forming docking sites for the STAT transcription factors (STAT1, STAT2 and STAT). STAT proteins are then phosphorylated by the JAKs, promoting their translocation into the nucleus to regulate expression of interferon-regulated genes. Functionally, potent inhibitor of type I IFN receptor activity. This is Interferon alpha/beta receptor 2 (IFNAR2) from Homo sapiens (Human).